The sequence spans 240 residues: TATA-box-binding protein (240 aa).

The tract at residues 21–61 is disordered; that stretch reads NTRQVWENQNRDGTKPATTFQSEEDIKRAAPESEKDTSATS. Positions 44-57 are enriched in basic and acidic residues; it reads EDIKRAAPESEKDT. 2 tandem repeats follow at residues 67 to 143 and 157 to 234.

It belongs to the TBP family. In terms of assembly, binds DNA as monomer. The 1.2 MDa TFIID complex is composed of TATA binding protein (TBP) and the 14 TBP-associated factors. One copy of each TAF1, TAF2, TAF3, TAF7, TAF8, TAF11, TAF13, two copies of each TAF4, TAF5, TAF6, TAF9, TAF10, TAF12, and three copies of TAF14. Interacts with TFC8.

The protein localises to the nucleus. Its function is as follows. General transcription factor that functions at the core of the DNA-binding general transcription factor complex TFIID. Binding of TFIID to a promoter (with or without TATA element) is the initial step in preinitiation complex (PIC) formation. TFIID plays a key role in the regulation of gene expression by RNA polymerase II through different activities such as transcription activator interaction, core promoter recognition and selectivity, TFIIA and TFIIB interaction, chromatin modification (histone acetylation by TAF1), facilitation of DNA opening and initiation of transcription. This chain is TATA-box-binding protein (SPT15), found in Saccharomyces cerevisiae (strain ATCC 204508 / S288c) (Baker's yeast).